The sequence spans 504 residues: Maturase K (504 aa).

This sequence belongs to the intron maturase 2 family. MatK subfamily.

It is found in the plastid. The protein resides in the chloroplast. Its function is as follows. Usually encoded in the trnK tRNA gene intron. Probably assists in splicing its own and other chloroplast group II introns. The sequence is that of Maturase K from Lepidium campestre (Field pepperwort).